Reading from the N-terminus, the 745-residue chain is Polyribonucleotide nucleotidyltransferase (745 aa).

Residues aspartate 487 and aspartate 493 each contribute to the Mg(2+) site. One can recognise a KH domain in the interval 554 to 613 (PRIETMQIPTDKIRDVIGTGGKIIREIVEKTGAKINIEDTGVVKIASSDGKAIKAAYNWI). One can recognise an S1 motif domain in the interval 623–691 (GTIYDGTIVK…ERGKIRLSMK (69 aa)). Residues 695–745 (QETGEDITEKLKAERAERGEPEREERSDRGDRGDRGPRRDRGERRRESSGE) form a disordered region. Residues 701-745 (ITEKLKAERAERGEPEREERSDRGDRGDRGPRRDRGERRRESSGE) show a composition bias toward basic and acidic residues.

The protein belongs to the polyribonucleotide nucleotidyltransferase family. Mg(2+) is required as a cofactor.

Its subcellular location is the cytoplasm. The enzyme catalyses RNA(n+1) + phosphate = RNA(n) + a ribonucleoside 5'-diphosphate. In terms of biological role, involved in mRNA degradation. Catalyzes the phosphorolysis of single-stranded polyribonucleotides processively in the 3'- to 5'-direction. This chain is Polyribonucleotide nucleotidyltransferase, found in Methylorubrum populi (strain ATCC BAA-705 / NCIMB 13946 / BJ001) (Methylobacterium populi).